A 122-amino-acid chain; its full sequence is uncharacterized protein (122 aa).

The signal sequence occupies residues 1 to 18 (MYSMAFLASSGLVANSSA). Asn-15 carries N-linked (GlcNAc...) asparagine glycosylation.

This is an uncharacterized protein from Saccharomyces cerevisiae (strain ATCC 204508 / S288c) (Baker's yeast).